The following is a 515-amino-acid chain: Anthranilate synthase component 1 (515 aa).

L-tryptophan is bound by residues threonine 40 and 291–293; that span reads PYM. 328-329 contributes to the chorismate binding site; sequence GT. Residue glutamate 361 participates in Mg(2+) binding. Residues tyrosine 449, arginine 469, 483–485, and glycine 485 each bind chorismate; that span reads GAG. Glutamate 498 is a Mg(2+) binding site.

The protein belongs to the anthranilate synthase component I family. As to quaternary structure, heterotetramer consisting of two non-identical subunits: a beta subunit (TrpG) and a large alpha subunit (TrpE). The cofactor is Mg(2+).

It carries out the reaction chorismate + L-glutamine = anthranilate + pyruvate + L-glutamate + H(+). It functions in the pathway amino-acid biosynthesis; L-tryptophan biosynthesis; L-tryptophan from chorismate: step 1/5. Feedback inhibited by tryptophan. Its function is as follows. Part of a heterotetrameric complex that catalyzes the two-step biosynthesis of anthranilate, an intermediate in the biosynthesis of L-tryptophan. In the first step, the glutamine-binding beta subunit (TrpG) of anthranilate synthase (AS) provides the glutamine amidotransferase activity which generates ammonia as a substrate that, along with chorismate, is used in the second step, catalyzed by the large alpha subunit of AS (TrpE) to produce anthranilate. In the absence of TrpG, TrpE can synthesize anthranilate directly from chorismate and high concentrations of ammonia. This chain is Anthranilate synthase component 1 (trpE), found in Buchnera aphidicola subsp. Schizaphis graminum (strain Sg).